The sequence spans 305 residues: MHKLFILTGPTASGKSEVSKIVAERLGCTIINCDSKQIYQHVPTITDQAEYLRTNPQFGLYGYVHPSNSYSVGLWLEDAKREILLAWEKKSPAIVVGGSGLYISSLIYGLSEIPPADAHIRQKARALLSEVGNDTFFELLLRRDANVCKIDRRNSNQLLRAFEVFESTGVSIFSWRERCPKKRPFENCEVCVLFPPKEELHPKINSRLVDMINSSAVAEVEYLMSLNLPADAPIMKAIGVREVIEYLRGNISLPEAVEAAQRNTRQYAKRQYTWLRRQLPQDAQFLPTREEMVQHLVSRLTETEK.

9–16 (GPTASGKS) contributes to the ATP binding site. Residue 11–16 (TASGKS) coordinates substrate. Positions 34–37 (DSKQ) are interaction with substrate tRNA.

This sequence belongs to the IPP transferase family. As to quaternary structure, monomer. The cofactor is Mg(2+).

It carries out the reaction adenosine(37) in tRNA + dimethylallyl diphosphate = N(6)-dimethylallyladenosine(37) in tRNA + diphosphate. In terms of biological role, catalyzes the transfer of a dimethylallyl group onto the adenine at position 37 in tRNAs that read codons beginning with uridine, leading to the formation of N6-(dimethylallyl)adenosine (i(6)A). The chain is tRNA dimethylallyltransferase from Anaplasma marginale (strain Florida).